The following is a 463-amino-acid chain: Fumarate hydratase class II (463 aa).

Residues 98-100 (SGT), 129-132 (HPND), 139-141 (SSN), and Thr-187 each bind substrate. His-188 acts as the Proton donor/acceptor in catalysis. The active site involves Ser-318. Residues Ser-319 and 324-326 (KVN) each bind substrate.

It belongs to the class-II fumarase/aspartase family. Fumarase subfamily. In terms of assembly, homotetramer.

The protein resides in the cytoplasm. It catalyses the reaction (S)-malate = fumarate + H2O. It participates in carbohydrate metabolism; tricarboxylic acid cycle; (S)-malate from fumarate: step 1/1. Involved in the TCA cycle. Catalyzes the stereospecific interconversion of fumarate to L-malate. The sequence is that of Fumarate hydratase class II from Caulobacter vibrioides (strain ATCC 19089 / CIP 103742 / CB 15) (Caulobacter crescentus).